The primary structure comprises 70 residues: Conotoxin Mr3.8 (70 aa).

An N-terminal signal peptide occupies residues 1–24; it reads MLKMGVVLFIFLVLFPLATLQLDA. The propeptide occupies 25 to 54; that stretch reads DQPVERYAKNKQLFNPHKRRGIILRAPGKR. Disulfide bonds link cysteine 55/cysteine 67, cysteine 56/cysteine 68, and cysteine 61/cysteine 65.

This sequence belongs to the conotoxin M superfamily. In terms of tissue distribution, expressed by the venom duct.

Its subcellular location is the secreted. Its function is as follows. In vitro, inhibits proliferation of the mice ovarian cancer cells ID8. The protein is Conotoxin Mr3.8 of Conus marmoreus (Marble cone).